The following is a 214-amino-acid chain: Ribosomal RNA small subunit methyltransferase G (214 aa).

S-adenosyl-L-methionine-binding positions include Gly-56, Phe-61, 107-108 (IE), and Arg-125.

It belongs to the methyltransferase superfamily. RNA methyltransferase RsmG family.

It localises to the cytoplasm. Specifically methylates the N7 position of a guanine in 16S rRNA. The protein is Ribosomal RNA small subunit methyltransferase G of Syntrophomonas wolfei subsp. wolfei (strain DSM 2245B / Goettingen).